We begin with the raw amino-acid sequence, 446 residues long: Glycerol-3-phosphate acyltransferase 3 (446 aa).

3 consecutive transmembrane segments (helical) span residues 25 to 45 (LPSA…VLVK), 142 to 162 (LRLT…LLPL), and 164 to 184 (FTLA…VGQL). The HXXXXD motif signature appears at 232–237 (HTSPID). A helical membrane pass occupies residues 352-372 (IVSYLLRIMTSWAIVCHVWYM). The disordered stretch occupies residues 418–446 (FKEEQQKNYSKMLVRNGSQGNLPAGTESD).

This sequence belongs to the 1-acyl-sn-glycerol-3-phosphate acyltransferase family.

It is found in the endoplasmic reticulum membrane. It catalyses the reaction sn-glycerol 3-phosphate + an acyl-CoA = a 1-acyl-sn-glycero-3-phosphate + CoA. It carries out the reaction a 1-acyl-sn-glycero-3-phosphate + an acyl-CoA = a 1,2-diacyl-sn-glycero-3-phosphate + CoA. The catalysed reaction is dodecanoyl-CoA + sn-glycerol 3-phosphate = 1-dodecanoyl-sn-glycerol 3-phosphate + CoA. The enzyme catalyses sn-glycerol 3-phosphate + hexadecanoyl-CoA = 1-hexadecanoyl-sn-glycero-3-phosphate + CoA. It catalyses the reaction sn-glycerol 3-phosphate + (9Z)-octadecenoyl-CoA = 1-(9Z-octadecenoyl)-sn-glycero-3-phosphate + CoA. It carries out the reaction (9Z,12Z)-octadecadienoyl-CoA + sn-glycerol 3-phosphate = 1-(9Z,12Z)-octadecadienoyl-sn-glycero-3-phosphate + CoA. The catalysed reaction is 1-tetradecanoyl-sn-glycerol 3-phosphate + (9Z)-octadecenoyl-CoA = 1-tetradecanoyl-2-(9Z)-octadecenoyl-sn-glycero-3-phosphate + CoA. The enzyme catalyses 1-hexadecanoyl-sn-glycero-3-phosphate + (9Z)-octadecenoyl-CoA = 1-hexadecanoyl-2-(9Z-octadecenoyl)-sn-glycero-3-phosphate + CoA. It catalyses the reaction 1-(9Z-octadecenoyl)-sn-glycero-3-phosphate + (9Z)-octadecenoyl-CoA = 1,2-di-(9Z-octadecenoyl)-sn-glycero-3-phosphate + CoA. It carries out the reaction 1-(6Z,9Z,12Z-octadecatrienoyl)-sn-glycero-3-phosphate + (9Z)-octadecenoyl-CoA = (6Z,9Z,12Z)-octadecatrienoyl-2-(9Z)-octadecenoyl-sn-glycero-3-phosphate + CoA. The catalysed reaction is 1-(9Z,12Z,15Z)-octadecatrienoyl-sn-glycero-3-phosphate + (9Z)-octadecenoyl-CoA = 1-(9Z,12Z,15Z)-octadecatrienoyl-2-(9Z)-octadecenoyl-sn-glycero-3-phosphate + CoA. The enzyme catalyses 1-(9Z-octadecenoyl)-sn-glycero-3-phosphate + tetradecanoyl-CoA = 1-(9Z)-octadecenoyl-2-tetradecanoyl-sn-glycero-3-phosphate + CoA. It catalyses the reaction 1-(9Z-octadecenoyl)-sn-glycero-3-phosphate + hexadecanoyl-CoA = 1-(9Z)-octadecenoyl-2-hexadecanoyl-sn-glycero-3-phosphate + CoA. It carries out the reaction 1-(9Z-octadecenoyl)-sn-glycero-3-phosphate + octadecanoyl-CoA = 1-(9Z-octadecenoyl)-2-octadecanoyl-sn-glycero-3-phosphate + CoA. The catalysed reaction is 1-(9Z-octadecenoyl)-sn-glycero-3-phosphate + (9Z,12Z)-octadecadienoyl-CoA = 1-(9Z)-octadecenoyl-2-(9Z,12Z)-octadecadienoyl-sn-glycero-3-phosphate + CoA. The enzyme catalyses 1-(5Z,8Z,11Z,14Z-eicosatetraenoyl)-sn-glycero-3-phosphate + (9Z)-octadecenoyl-CoA = 1-(5Z,8Z,11Z,14Z)-eicosatetraenoyl-2-(9Z)-octadecenoyl-sn-glycero-3-phosphate + CoA. It functions in the pathway glycerolipid metabolism; triacylglycerol biosynthesis. The protein operates within phospholipid metabolism; CDP-diacylglycerol biosynthesis; CDP-diacylglycerol from sn-glycerol 3-phosphate: step 1/3. In terms of biological role, converts glycerol-3-phosphate to 1-acyl-sn-glycerol-3-phosphate (lysophosphatidic acid or LPA) by incorporating an acyl moiety at the sn-1 position of the glycerol backbone. Also converts LPA into 1,2-diacyl-sn-glycerol-3-phosphate (phosphatidic acid or PA) by incorporating an acyl moiety at the sn-2 position of the glycerol backbone. Protects cells against lipotoxicity. The protein is Glycerol-3-phosphate acyltransferase 3 of Gallus gallus (Chicken).